The sequence spans 235 residues: Ribonuclease HII (235 aa).

One can recognise an RNase H type-2 domain in the interval 23 to 212; it reads GLVAGVDEAG…VAHVVSIARM (190 aa). 3 residues coordinate a divalent metal cation: D29, E30, and D121.

This sequence belongs to the RNase HII family. Mn(2+) serves as cofactor. Requires Mg(2+) as cofactor.

It is found in the cytoplasm. The enzyme catalyses Endonucleolytic cleavage to 5'-phosphomonoester.. Its function is as follows. Endonuclease that specifically degrades the RNA of RNA-DNA hybrids. In Delftia acidovorans (strain DSM 14801 / SPH-1), this protein is Ribonuclease HII.